A 94-amino-acid chain; its full sequence is Long neurotoxin LNTX8 (94 aa).

An N-terminal signal peptide occupies residues 1–21; it reads MKTLLLTLVVVTIMCLDLGYT. Disulfide bonds link Cys24/Cys43, Cys36/Cys64, Cys49/Cys53, Cys68/Cys79, and Cys80/Cys85.

The protein belongs to the three-finger toxin family. Long-chain subfamily. Type II alpha-neurotoxin sub-subfamily. In terms of tissue distribution, expressed by the venom gland.

It localises to the secreted. In terms of biological role, binds with high affinity to muscular (alpha-1/CHRNA1) and neuronal (alpha-7/CHRNA7) nicotinic acetylcholine receptor (nAChR) and inhibits acetylcholine from binding to the receptor, thereby impairing neuromuscular and neuronal transmission. This Ophiophagus hannah (King cobra) protein is Long neurotoxin LNTX8.